Reading from the N-terminus, the 257-residue chain is Leucine-rich repeat-containing protein 3 (257 aa).

Residues 1 to 32 (MGPRGRQSPSSPLAPSQGSCFFILFCLRLGAS) form the signal peptide. The LRRNT domain occupies 33–64 (CPQSCQCPDHAGAVAVHCSSRGLQEIPRDIPA). LRR repeat units follow at residues 65–86 (NTVL…AFQH), 89–110 (QLRE…AFSG), and 114–135 (GLRL…ALGK). The LRRCT domain maps to 145–198 (NPLHCECALQEALWELKLDPDSVDEIACHTSAQEQFVGKPLIQVLDSGASFCST). A helical transmembrane segment spans residues 205-225 (VAMLVTMFGWFTMVIAYVVYY).

This sequence belongs to the LRRC3 family.

Its subcellular location is the membrane. The polypeptide is Leucine-rich repeat-containing protein 3 (Lrrc3) (Rattus norvegicus (Rat)).